An 810-amino-acid polypeptide reads, in one-letter code: Leucine--tRNA ligase (810 aa).

The 'HIGH' region signature appears at 41 to 52 (PYPSGQGLHVGH). Positions 582 to 586 (KMSKS) match the 'KMSKS' region motif. An ATP-binding site is contributed by lysine 585.

This sequence belongs to the class-I aminoacyl-tRNA synthetase family.

The protein resides in the cytoplasm. It catalyses the reaction tRNA(Leu) + L-leucine + ATP = L-leucyl-tRNA(Leu) + AMP + diphosphate. In Oenococcus oeni (strain ATCC BAA-331 / PSU-1), this protein is Leucine--tRNA ligase.